Consider the following 1184-residue polypeptide: DNA-directed RNA polymerase subunit beta (1184 aa).

The segment at 1160–1184 (DDDFTNQNDAFNIVQPENAAAEKTE) is disordered.

This sequence belongs to the RNA polymerase beta chain family. In terms of assembly, the RNAP catalytic core consists of 2 alpha, 1 beta, 1 beta' and 1 omega subunit. When a sigma factor is associated with the core the holoenzyme is formed, which can initiate transcription.

It catalyses the reaction RNA(n) + a ribonucleoside 5'-triphosphate = RNA(n+1) + diphosphate. Its function is as follows. DNA-dependent RNA polymerase catalyzes the transcription of DNA into RNA using the four ribonucleoside triphosphates as substrates. In Listeria welshimeri serovar 6b (strain ATCC 35897 / DSM 20650 / CCUG 15529 / CIP 8149 / NCTC 11857 / SLCC 5334 / V8), this protein is DNA-directed RNA polymerase subunit beta.